The chain runs to 178 residues: Interleukin-10 (178 aa).

Residues 1–18 form the signal peptide; sequence MPSSALLYCLILLAGVRP. Cystine bridges form between cysteine 30/cysteine 126 and cysteine 80/cysteine 132. N-linked (GlcNAc...) asparagine glycosylation occurs at asparagine 134.

The protein belongs to the IL-10 family. Homodimer. Interacts with IL10RA and IL10RB.

It is found in the secreted. Major immune regulatory cytokine that acts on many cells of the immune system where it has profound anti-inflammatory functions, limiting excessive tissue disruption caused by inflammation. Mechanistically, IL10 binds to its heterotetrameric receptor comprising IL10RA and IL10RB leading to JAK1 and STAT2-mediated phosphorylation of STAT3. In turn, STAT3 translocates to the nucleus where it drives expression of anti-inflammatory mediators. Targets antigen-presenting cells (APCs) such as macrophages and monocytes and inhibits their release of pro-inflammatory cytokines including granulocyte-macrophage colony-stimulating factor /GM-CSF, granulocyte colony-stimulating factor/G-CSF, IL-1 alpha, IL-1 beta, IL-6, IL-8 and TNF-alpha. Also interferes with antigen presentation by reducing the expression of MHC-class II and co-stimulatory molecules, thereby inhibiting their ability to induce T cell activation. In addition, controls the inflammatory response of macrophages by reprogramming essential metabolic pathways including mTOR signaling. In Meriones unguiculatus (Mongolian jird), this protein is Interleukin-10 (IL10).